We begin with the raw amino-acid sequence, 543 residues long: Probable protein kinase UbiB (543 aa).

The region spanning 123-500 (DFDQQPLASA…HRRHAQARFL (378 aa)) is the Protein kinase domain. Residues 129 to 137 (LASASVAQV) and K152 each bind ATP. D286 serves as the catalytic Proton acceptor. The next 2 membrane-spanning stretches (helical) occupy residues 499–519 (FLLG…PTHE) and 521–541 (LASA…WKIS).

This sequence belongs to the ABC1 family. UbiB subfamily.

Its subcellular location is the cell inner membrane. It participates in cofactor biosynthesis; ubiquinone biosynthesis [regulation]. Is probably a protein kinase regulator of UbiI activity which is involved in aerobic coenzyme Q (ubiquinone) biosynthesis. The sequence is that of Probable protein kinase UbiB from Tolumonas auensis (strain DSM 9187 / NBRC 110442 / TA 4).